Consider the following 273-residue polypeptide: Undecaprenyl-diphosphatase (273 aa).

The next 8 helical transmembrane spans lie at 13–35 (LGVV…IIVG), 45–65 (ANTF…VMFW), 90–110 (LSLI…LIFH), 116–136 (LFNP…LIAA), 157–177 (AFVI…RSGA), 190–210 (YAAS…ATVL), 222–242 (GDVP…LIAI), and 252–272 (ISFI…YVVF).

Belongs to the UppP family.

The protein resides in the cell inner membrane. The enzyme catalyses di-trans,octa-cis-undecaprenyl diphosphate + H2O = di-trans,octa-cis-undecaprenyl phosphate + phosphate + H(+). In terms of biological role, catalyzes the dephosphorylation of undecaprenyl diphosphate (UPP). Confers resistance to bacitracin. The chain is Undecaprenyl-diphosphatase from Klebsiella pneumoniae subsp. pneumoniae (strain ATCC 700721 / MGH 78578).